Here is a 284-residue protein sequence, read N- to C-terminus: Pantothenate synthetase (284 aa).

30–37 (MGALHDGH) serves as a coordination point for ATP. Residue His-37 is the Proton donor of the active site. Gln-61 provides a ligand contact to (R)-pantoate. Beta-alanine is bound at residue Gln-61. ATP is bound at residue 147 to 150 (GEKD). Gln-153 is a binding site for (R)-pantoate. ATP contacts are provided by residues Val-176 and 184 to 187 (KSSR).

This sequence belongs to the pantothenate synthetase family. As to quaternary structure, homodimer.

The protein localises to the cytoplasm. It catalyses the reaction (R)-pantoate + beta-alanine + ATP = (R)-pantothenate + AMP + diphosphate + H(+). It functions in the pathway cofactor biosynthesis; (R)-pantothenate biosynthesis; (R)-pantothenate from (R)-pantoate and beta-alanine: step 1/1. Its function is as follows. Catalyzes the condensation of pantoate with beta-alanine in an ATP-dependent reaction via a pantoyl-adenylate intermediate. The sequence is that of Pantothenate synthetase from Chloroherpeton thalassium (strain ATCC 35110 / GB-78).